Reading from the N-terminus, the 37-residue chain is Large ribosomal subunit protein bL36c (37 aa).

Belongs to the bacterial ribosomal protein bL36 family.

It localises to the plastid. Its subcellular location is the chloroplast. In Acorus calamus (Sweet flag), this protein is Large ribosomal subunit protein bL36c.